Reading from the N-terminus, the 686-residue chain is CAI-1 autoinducer sensor kinase/phosphatase CqsS (686 aa).

6 helical membrane passes run 21-41, 47-64, 77-97, 100-120, 124-144, and 152-172; these read LVGW…EYWF, NLGL…LVFR, GYFL…MMLM, WSTI…LLVH, VMAL…YGLT, and IEWQ…LCFF. Residues 191-416 enclose the Histidine kinase domain; that stretch reads GIAHEMRNPL…EFVLSFPRYD (226 aa). H194 bears the Phosphohistidine; by autocatalysis mark. The Response regulatory domain maps to 569-686; it reads RILVVDDNQS…VLLNKVAAWV (118 aa). D618 carries the 4-aspartylphosphate modification.

The protein localises to the cell membrane. It carries out the reaction ATP + protein L-histidine = ADP + protein N-phospho-L-histidine.. In terms of biological role, senses the quorum-sensing autoinducer CAI-1 ((S)-3-hydroxytridecan-4-one) which probably functions as an intragenus signal. The sensory signal is then relayed to LuxU and LuxO. This chain is CAI-1 autoinducer sensor kinase/phosphatase CqsS (cqsS), found in Vibrio cholerae serotype O1 (strain ATCC 39315 / El Tor Inaba N16961).